We begin with the raw amino-acid sequence, 538 residues long: Ribulokinase 1 (538 aa).

It belongs to the ribulokinase family.

It carries out the reaction D-ribulose + ATP = D-ribulose 5-phosphate + ADP + H(+). It catalyses the reaction L-ribulose + ATP = L-ribulose 5-phosphate + ADP + H(+). It functions in the pathway carbohydrate degradation; L-arabinose degradation via L-ribulose; D-xylulose 5-phosphate from L-arabinose (bacterial route): step 2/3. The protein is Ribulokinase 1 of Staphylococcus saprophyticus subsp. saprophyticus (strain ATCC 15305 / DSM 20229 / NCIMB 8711 / NCTC 7292 / S-41).